Reading from the N-terminus, the 254-residue chain is tRNA threonylcarbamoyladenosine dehydratase (254 aa).

The protein belongs to the HesA/MoeB/ThiF family.

In terms of biological role, catalyzes the ATP-dependent dehydration of threonylcarbamoyladenosine at position 37 (t(6)A37) to form cyclic t(6)A37 (ct(6)A37) in tRNAs that read codons beginning with adenine. This Bacillus subtilis (strain 168) protein is tRNA threonylcarbamoyladenosine dehydratase (tcdA).